Consider the following 1413-residue polypeptide: Alpha-latrocrustotoxin-Lt1a (1413 aa).

The propeptide occupies 1–28 (VSIFIFHFSANILVRNSEMKGKRVISKR). A helix H8 is the probable transmembrane region of the tetrameric pore inserted in the target cell membrane region spans residues 238–257 (ALFALFYGTQTFISIMFYLV). 20 ANK repeats span residues 457 to 490 (DIHRDLYNAAQMPYKETALGICRKLIDSGAQVGA), 494 to 524 (MGRKSIHASATAGNDDVARLLLAKNNGLLNV), 528 to 557 (NGYTPLHIASERKNNDFVKFLLEKGADVNV), 562 to 592 (NELTPLHLAARQDFTIIVKTLMEKRGIDVNA), 596 to 625 (AGFTPLHLSITSNSRAARTLINETPAGINI), 629 to 658 (SGLTPLHLAVLQNNLSAAKVLVKSNKKVKL), 664 to 694 (NGMTPLHYASMLGNLEFVKYFTSEQGIDVNA), 699 to 729 (KNWTPLHLAILFKKFDVAQSLLQVRNIDIST), 733 to 762 (QAITPLHLAAATGNSQIVKTILNSGAVVDQ), 766 to 795 (NGFTALHLAIMNPNTETPQFLIAKGANINA), 799 to 828 (DGSTPLHFAAALGKTNIFQLLMDKGANIKA), 832 to 861 (INQMPIHEAVVNGHLAIVKMLIEQDSSLMN), 866 to 895 (RDEYPFYLAAEKRYKDVFNYLESKGADVNE), 899 to 928 (DGNTLLHLFSINGEVEVVQFLIQNGADFRL), 965 to 995 (RGKTILYHAICDSVKYDRIEVVRYFVETLNE), 996 to 1026 (DQCSPLQEAAAYAHLDLVKYFVQERGINPTA), 1031 to 1072 (NQVS…DINK), 1077 to 1106 (QQSTPVSSAVYGNKVSILNYLIRNGADPNK), 1109 to 1139 (RGDPPLFIAAMIGQYDIVKSLVEQHKIDVNT), and 1143 to 1172 (EQFTPLHAAASNDHIDVVKYLIQKGADVNA). A propeptide spanning residues 1193 to 1413 (RSLGRRFFRN…NRPTNVLQIK (221 aa)) is cleaved from the precursor.

This sequence belongs to the cationic peptide 01 (latrotoxin) family. 01 (alpha-latrocrustotoxin) subfamily. As to quaternary structure, homotetramer in membranes. Expressed by the venom gland.

The protein resides in the secreted. It localises to the target cell membrane. In terms of biological role, crustacean-selective presynaptic neurotoxin that induces neurotransmitter exocytosis. May bind to crustacean neurexin-1 homolog, adhesion G protein-coupled receptor L1 homolog, and receptor-type tyrosine-protein phosphatase S homolog, and induces neurotransmitter exocytosis both by forming tetrameric pores in membranes and signaling via G protein-coupled receptor. This recombinant protein form channels in artificial membrane bilayers, that are stabilized by calcium ions and allow calcium flux at negative membrane potentials. The sequence is that of Alpha-latrocrustotoxin-Lt1a from Latrodectus tredecimguttatus (Mediterranean black widow spider).